The sequence spans 444 residues: Glutamyl-tRNA reductase (444 aa).

Substrate-binding positions include 49–52 (TCNR), serine 117, 122–124 (EPQ), and glutamine 128. The Nucleophile role is filled by cysteine 50. 202 to 207 (GAGETI) provides a ligand contact to NADP(+).

Belongs to the glutamyl-tRNA reductase family. As to quaternary structure, homodimer.

It carries out the reaction (S)-4-amino-5-oxopentanoate + tRNA(Glu) + NADP(+) = L-glutamyl-tRNA(Glu) + NADPH + H(+). The protein operates within porphyrin-containing compound metabolism; protoporphyrin-IX biosynthesis; 5-aminolevulinate from L-glutamyl-tRNA(Glu): step 1/2. In terms of biological role, catalyzes the NADPH-dependent reduction of glutamyl-tRNA(Glu) to glutamate 1-semialdehyde (GSA). This is Glutamyl-tRNA reductase from Mannheimia succiniciproducens (strain KCTC 0769BP / MBEL55E).